The sequence spans 216 residues: Imidazole glycerol phosphate synthase subunit HisH (216 aa).

The Glutamine amidotransferase type-1 domain maps to 5 to 213; the sequence is RLAVIDYDAG…VEFVARRLPA (209 aa). Catalysis depends on cysteine 83, which acts as the Nucleophile. Active-site residues include histidine 188 and glutamate 190.

As to quaternary structure, heterodimer of HisH and HisF.

Its subcellular location is the cytoplasm. It carries out the reaction 5-[(5-phospho-1-deoxy-D-ribulos-1-ylimino)methylamino]-1-(5-phospho-beta-D-ribosyl)imidazole-4-carboxamide + L-glutamine = D-erythro-1-(imidazol-4-yl)glycerol 3-phosphate + 5-amino-1-(5-phospho-beta-D-ribosyl)imidazole-4-carboxamide + L-glutamate + H(+). The catalysed reaction is L-glutamine + H2O = L-glutamate + NH4(+). The protein operates within amino-acid biosynthesis; L-histidine biosynthesis; L-histidine from 5-phospho-alpha-D-ribose 1-diphosphate: step 5/9. IGPS catalyzes the conversion of PRFAR and glutamine to IGP, AICAR and glutamate. The HisH subunit catalyzes the hydrolysis of glutamine to glutamate and ammonia as part of the synthesis of IGP and AICAR. The resulting ammonia molecule is channeled to the active site of HisF. In Synechococcus sp. (strain JA-3-3Ab) (Cyanobacteria bacterium Yellowstone A-Prime), this protein is Imidazole glycerol phosphate synthase subunit HisH.